Consider the following 579-residue polypeptide: Salivary alpha-glucosidase (579 aa).

An N-terminal signal peptide occupies residues 1 to 18; the sequence is MKIFVPLLSFLLAGLTTG. Ca(2+) is bound by residues D37, D39, D41, I43, D45, and N118. N-linked (GlcNAc...) asparagine glycosylation is found at N118 and N151. D189 serves as a coordination point for Ca(2+). D219 (nucleophile) is an active-site residue. Ca(2+) is bound by residues Y223, L224, and E226. N-linked (GlcNAc...) asparagine glycosylation is present at N282. Residue E290 is the Proton donor of the active site. N-linked (GlcNAc...) asparagine glycosylation is found at N304, N325, and N401. N-acetyl-beta-D-glucosamine is bound at residue N325.

It belongs to the glycosyl hydrolase 13 family. In terms of tissue distribution, saliva (at protein level). Proximal lateral lobes of the salivary gland (at protein level).

The protein localises to the secreted. It catalyses the reaction Hydrolysis of terminal, non-reducing (1-&gt;4)-linked alpha-D-glucose residues with release of alpha-D-glucose.. Functions as a glucosidase that shows high activity toward sucrose, a major component of nectar. Assists the mosquito in its sugar-feeding capabilities. The sequence is that of Salivary alpha-glucosidase from Aedes aegypti (Yellowfever mosquito).